Consider the following 174-residue polypeptide: MVMTNILCQILSDDLPELPPCREPSKGMIVGNLGMTSNTMTTEGPFAKLDVESVLSFMSPSCTLRSFPSSLGKPALQTKEESKADFQGLKDFFYNFQLRVKDGAEPVIDEPARKVVLHIEGKGDSLVGRFETEYVYILQINEEGTMVEDFFQFADSATRDAWGKKIEAHFSARN.

Belongs to the trt14 isomerase family. As to quaternary structure, homodimer.

It participates in secondary metabolite biosynthesis; terpenoid biosynthesis. Part of the gene cluster B that mediates the biosynthesis of austinol and dehydroaustinol, two fungal meroterpenoids. The first step of the pathway is the synthesis of 3,5-dimethylorsellinic acid by the polyketide synthase ausA. 3,5-dimethylorsellinic acid is then prenylated by the polyprenyl transferase ausN. Further epoxidation by the FAD-dependent monooxygenase ausM and cyclization by the probable terpene cyclase ausL lead to the formation of protoaustinoid A. Protoaustinoid A is then oxidized to spiro-lactone preaustinoid A3 by the combined action of the FAD-binding monooxygenases ausB and ausC, and the dioxygenase ausE. Acid-catalyzed keto-rearrangement and ring contraction of the tetraketide portion of preaustinoid A3 by ausJ lead to the formation of preaustinoid A4. The aldo-keto reductase ausK, with the help of ausH, is involved in the next step by transforming preaustinoid A4 into isoaustinone which is in turn hydroxylated by the P450 monooxygenase ausI to form austinolide. Finally, the cytochrome P450 monooxygenase ausG modifies austinolide to austinol. Austinol can be further modified to dehydroaustinol which forms a diffusible complex with diorcinol that initiates conidiation. Due to genetic rearrangements of the clusters and the subsequent loss of some enzymes, the end products of the Emericella nidulans austinoid biosynthesis clusters are austinol and dehydroaustinol, even if additional enzymes, such as the O-acetyltransferase ausQ and the cytochrome P450 monooxygenase ausR are still functional. The chain is Austinoid biosynthesis clusters protein H from Emericella nidulans (strain FGSC A4 / ATCC 38163 / CBS 112.46 / NRRL 194 / M139) (Aspergillus nidulans).